A 1295-amino-acid polypeptide reads, in one-letter code: Phosphoribosylformylglycinamidine synthase (1295 aa).

Residues 305-316 (GAATGSGGEIRD), 384-386 (TGY), and Ala676 each bind ATP. Positions 677, 716, 720, and 884 each coordinate Mg(2+). Ser886 is an ATP binding site. In terms of domain architecture, Glutamine amidotransferase type-1 spans 1042 to 1295 (VAILREQGVN…MFRNARKHLG (254 aa)). Catalysis depends on Cys1135, which acts as the Nucleophile. Residues His1260 and Glu1262 contribute to the active site.

It in the N-terminal section; belongs to the FGAMS family. In terms of assembly, monomer.

It is found in the cytoplasm. It catalyses the reaction N(2)-formyl-N(1)-(5-phospho-beta-D-ribosyl)glycinamide + L-glutamine + ATP + H2O = 2-formamido-N(1)-(5-O-phospho-beta-D-ribosyl)acetamidine + L-glutamate + ADP + phosphate + H(+). The protein operates within purine metabolism; IMP biosynthesis via de novo pathway; 5-amino-1-(5-phospho-D-ribosyl)imidazole from N(2)-formyl-N(1)-(5-phospho-D-ribosyl)glycinamide: step 1/2. Phosphoribosylformylglycinamidine synthase involved in the purines biosynthetic pathway. Catalyzes the ATP-dependent conversion of formylglycinamide ribonucleotide (FGAR) and glutamine to yield formylglycinamidine ribonucleotide (FGAM) and glutamate. The sequence is that of Phosphoribosylformylglycinamidine synthase from Idiomarina loihiensis (strain ATCC BAA-735 / DSM 15497 / L2-TR).